Consider the following 215-residue polypeptide: MGQKVNPIGLRLNIVKTWDSRWYADKNYADFVFEDYKLRAFLKKKLFHAGISKIEIERFTKRIRIRVFAARPGIIIGKKGSEIALLKKEIEQMITPEVLIDIQEIRRPEIDAQLVAENISAQLERRIAFRRAMKRSVSSAMRFGAQGIKIICSGRLGGAEMARTEWYKEGRIPLHTLRADVDYGFTEAKTTYGAIGIKTFIFKGEVLKADRNVKA.

Positions 38-106 (LRAFLKKKLF…EVLIDIQEIR (69 aa)) constitute a KH type-2 domain.

Belongs to the universal ribosomal protein uS3 family. Part of the 30S ribosomal subunit. Forms a tight complex with proteins S10 and S14.

Its function is as follows. Binds the lower part of the 30S subunit head. Binds mRNA in the 70S ribosome, positioning it for translation. The chain is Small ribosomal subunit protein uS3 from Desulforapulum autotrophicum (strain ATCC 43914 / DSM 3382 / VKM B-1955 / HRM2) (Desulfobacterium autotrophicum).